The sequence spans 544 residues: Chaperonin GroEL (544 aa).

ATP-binding positions include 30–33 (TLGP), Lys51, 87–91 (DGTTT), Gly415, and Asp495.

The protein belongs to the chaperonin (HSP60) family. Forms a cylinder of 14 subunits composed of two heptameric rings stacked back-to-back. Interacts with the co-chaperonin GroES.

Its subcellular location is the cytoplasm. It carries out the reaction ATP + H2O + a folded polypeptide = ADP + phosphate + an unfolded polypeptide.. Together with its co-chaperonin GroES, plays an essential role in assisting protein folding. The GroEL-GroES system forms a nano-cage that allows encapsulation of the non-native substrate proteins and provides a physical environment optimized to promote and accelerate protein folding. The chain is Chaperonin GroEL from Aeromonas salmonicida (strain A449).